We begin with the raw amino-acid sequence, 144 residues long: Large ribosomal subunit protein uL13 (144 aa).

This sequence belongs to the universal ribosomal protein uL13 family. In terms of assembly, part of the 50S ribosomal subunit.

Its function is as follows. This protein is one of the early assembly proteins of the 50S ribosomal subunit, although it is not seen to bind rRNA by itself. It is important during the early stages of 50S assembly. The polypeptide is Large ribosomal subunit protein uL13 (Chloroflexus aurantiacus (strain ATCC 29366 / DSM 635 / J-10-fl)).